Here is a 213-residue protein sequence, read N- to C-terminus: Phosphoenolpyruvate guanylyltransferase (213 aa).

3 residues coordinate phosphoenolpyruvate: threonine 146, glycine 161, and serine 164.

This sequence belongs to the CofC family.

It catalyses the reaction phosphoenolpyruvate + GTP + H(+) = enolpyruvoyl-2-diphospho-5'-guanosine + diphosphate. It functions in the pathway cofactor biosynthesis; coenzyme F420 biosynthesis. Functionally, guanylyltransferase that catalyzes the activation of phosphoenolpyruvate (PEP) as enolpyruvoyl-2-diphospho-5'-guanosine, via the condensation of PEP with GTP. It is involved in the biosynthesis of coenzyme F420, a hydride carrier cofactor. This chain is Phosphoenolpyruvate guanylyltransferase, found in Mycolicibacterium vanbaalenii (strain DSM 7251 / JCM 13017 / BCRC 16820 / KCTC 9966 / NRRL B-24157 / PYR-1) (Mycobacterium vanbaalenii).